Reading from the N-terminus, the 1358-residue chain is Mediator of RNA polymerase II transcription subunit 12 (1358 aa).

Positions 629 to 654 (VRYNYEQLQIQLNTAKEQMLQEQFEH) form a coiled coil.

It belongs to the Mediator complex subunit 12 family. As to quaternary structure, component of the SRB8-11 complex, which itself associates with the Mediator complex.

Its subcellular location is the nucleus. Functionally, component of the SRB8-11 complex. The SRB8-11 complex is a regulatory module of the Mediator complex which is itself involved in regulation of basal and activated RNA polymerase II-dependent transcription. The SRB8-11 complex may be involved in the transcriptional repression of a subset of genes regulated by Mediator. It may inhibit the association of the Mediator complex with RNA polymerase II to form the holoenzyme complex. This chain is Mediator of RNA polymerase II transcription subunit 12 (SRB8), found in Eremothecium gossypii (strain ATCC 10895 / CBS 109.51 / FGSC 9923 / NRRL Y-1056) (Yeast).